The following is a 332-amino-acid chain: Adenosine deaminase (332 aa).

Residues histidine 12 and histidine 14 each coordinate Zn(2+). 3 residues coordinate substrate: histidine 14, aspartate 16, and glycine 170. Histidine 197 is a binding site for Zn(2+). The active-site Proton donor is glutamate 200. Aspartate 278 contributes to the Zn(2+) binding site.

This sequence belongs to the metallo-dependent hydrolases superfamily. Adenosine and AMP deaminases family. Adenosine deaminase subfamily. The cofactor is Zn(2+).

The catalysed reaction is adenosine + H2O + H(+) = inosine + NH4(+). It carries out the reaction 2'-deoxyadenosine + H2O + H(+) = 2'-deoxyinosine + NH4(+). In terms of biological role, catalyzes the hydrolytic deamination of adenosine and 2-deoxyadenosine. In Clostridium perfringens (strain SM101 / Type A), this protein is Adenosine deaminase.